Here is a 362-residue protein sequence, read N- to C-terminus: Methylthioribose-1-phosphate isomerase (362 aa).

Residues 49-51, Arg-89, and Gln-201 each bind substrate; that span reads RGA. Residue Asp-242 is the Proton donor of the active site. A substrate-binding site is contributed by 252-253; that stretch reads NK.

Belongs to the eIF-2B alpha/beta/delta subunits family. MtnA subfamily.

It carries out the reaction 5-(methylsulfanyl)-alpha-D-ribose 1-phosphate = 5-(methylsulfanyl)-D-ribulose 1-phosphate. The protein operates within amino-acid biosynthesis; L-methionine biosynthesis via salvage pathway; L-methionine from S-methyl-5-thio-alpha-D-ribose 1-phosphate: step 1/6. Functionally, catalyzes the interconversion of methylthioribose-1-phosphate (MTR-1-P) into methylthioribulose-1-phosphate (MTRu-1-P). This chain is Methylthioribose-1-phosphate isomerase, found in Leptospira borgpetersenii serovar Hardjo-bovis (strain JB197).